Reading from the N-terminus, the 598-residue chain is Peptidoglycan D,D-transpeptidase FtsI homolog (598 aa).

The helical transmembrane segment at 12 to 33 (IVLVWILFFSGSSLLLGRLFYL) threads the bilayer. The active-site Acyl-ester intermediate is the S291.

The protein belongs to the transpeptidase family.

It is found in the plastid. The protein localises to the chloroplast membrane. It carries out the reaction Preferential cleavage: (Ac)2-L-Lys-D-Ala-|-D-Ala. Also transpeptidation of peptidyl-alanyl moieties that are N-acyl substituents of D-alanine.. The sequence is that of Peptidoglycan D,D-transpeptidase FtsI homolog (ftsI) from Mesostigma viride (Green alga).